A 338-amino-acid polypeptide reads, in one-letter code: DNA-directed RNA polymerase subunit alpha (338 aa).

The tract at residues Met1–Asp234 is alpha N-terminal domain (alpha-NTD). The alpha C-terminal domain (alpha-CTD) stretch occupies residues Phe250–Phe338.

It belongs to the RNA polymerase alpha chain family. As to quaternary structure, homodimer. The RNAP catalytic core consists of 2 alpha, 1 beta, 1 beta' and 1 omega subunit. When a sigma factor is associated with the core the holoenzyme is formed, which can initiate transcription.

The catalysed reaction is RNA(n) + a ribonucleoside 5'-triphosphate = RNA(n+1) + diphosphate. Its function is as follows. DNA-dependent RNA polymerase catalyzes the transcription of DNA into RNA using the four ribonucleoside triphosphates as substrates. The protein is DNA-directed RNA polymerase subunit alpha of Paracoccus denitrificans (strain Pd 1222).